The sequence spans 206 residues: Thiamine-phosphate synthase (206 aa).

4-amino-2-methyl-5-(diphosphooxymethyl)pyrimidine-binding positions include 36–40 (QLRAK) and Asn68. Mg(2+)-binding residues include Asp69 and Asp88. Ser105 serves as a coordination point for 4-amino-2-methyl-5-(diphosphooxymethyl)pyrimidine. Residue 131-133 (TPT) participates in 2-[(2R,5Z)-2-carboxy-4-methylthiazol-5(2H)-ylidene]ethyl phosphate binding. Lys134 serves as a coordination point for 4-amino-2-methyl-5-(diphosphooxymethyl)pyrimidine. Gly162 contacts 2-[(2R,5Z)-2-carboxy-4-methylthiazol-5(2H)-ylidene]ethyl phosphate.

It belongs to the thiamine-phosphate synthase family. Mg(2+) is required as a cofactor.

It carries out the reaction 2-[(2R,5Z)-2-carboxy-4-methylthiazol-5(2H)-ylidene]ethyl phosphate + 4-amino-2-methyl-5-(diphosphooxymethyl)pyrimidine + 2 H(+) = thiamine phosphate + CO2 + diphosphate. The catalysed reaction is 2-(2-carboxy-4-methylthiazol-5-yl)ethyl phosphate + 4-amino-2-methyl-5-(diphosphooxymethyl)pyrimidine + 2 H(+) = thiamine phosphate + CO2 + diphosphate. The enzyme catalyses 4-methyl-5-(2-phosphooxyethyl)-thiazole + 4-amino-2-methyl-5-(diphosphooxymethyl)pyrimidine + H(+) = thiamine phosphate + diphosphate. The protein operates within cofactor biosynthesis; thiamine diphosphate biosynthesis; thiamine phosphate from 4-amino-2-methyl-5-diphosphomethylpyrimidine and 4-methyl-5-(2-phosphoethyl)-thiazole: step 1/1. Its function is as follows. Condenses 4-methyl-5-(beta-hydroxyethyl)thiazole monophosphate (THZ-P) and 2-methyl-4-amino-5-hydroxymethyl pyrimidine pyrophosphate (HMP-PP) to form thiamine monophosphate (TMP). This chain is Thiamine-phosphate synthase, found in Thermus thermophilus (strain ATCC BAA-163 / DSM 7039 / HB27).